Reading from the N-terminus, the 187-residue chain is Superoxide dismutase [Cu-Zn] (187 aa).

A signal peptide spans 1–23 (MMKMKTLLALAISGICAAGVANA). Residues histidine 80, histidine 82, and histidine 105 each contribute to the Cu cation site. Cysteines 87 and 183 form a disulfide. Histidine 105, histidine 114, histidine 123, and aspartate 126 together coordinate Zn(2+). Cu cation is bound at residue histidine 161.

It belongs to the Cu-Zn superoxide dismutase family. Homodimer. It depends on Cu cation as a cofactor. Requires Zn(2+) as cofactor.

It is found in the periplasm. It catalyses the reaction 2 superoxide + 2 H(+) = H2O2 + O2. Its function is as follows. Destroys radicals which are normally produced within the cells and which are toxic to biological systems. Functionally, may confer survival advantage by accelerating dismutation of superoxide of environmental origin to hydrogen peroxide, disruptive to the normal mucociliary clearance process in the host. The protein is Superoxide dismutase [Cu-Zn] (sodC) of Haemophilus parainfluenzae.